The primary structure comprises 271 residues: Tryptophan synthase alpha chain (271 aa).

Catalysis depends on proton acceptor residues E49 and D60.

This sequence belongs to the TrpA family. As to quaternary structure, tetramer of two alpha and two beta chains.

It catalyses the reaction (1S,2R)-1-C-(indol-3-yl)glycerol 3-phosphate + L-serine = D-glyceraldehyde 3-phosphate + L-tryptophan + H2O. It participates in amino-acid biosynthesis; L-tryptophan biosynthesis; L-tryptophan from chorismate: step 5/5. Its function is as follows. The alpha subunit is responsible for the aldol cleavage of indoleglycerol phosphate to indole and glyceraldehyde 3-phosphate. This chain is Tryptophan synthase alpha chain, found in Leptothrix cholodnii (strain ATCC 51168 / LMG 8142 / SP-6) (Leptothrix discophora (strain SP-6)).